The sequence spans 422 residues: F-box protein At3g12350 (422 aa).

The 48-residue stretch at 5-52 (ALPFCEIPEDLQLRILSLLTPAEISSFACTSKRFASLCQEDGKIWHVM) folds into the F-box domain. Basic and acidic residues-rich tracts occupy residues 197–207 (NNRREDQRSSG) and 242–252 (KEKERQASRTK). Disordered regions lie at residues 197–216 (NNRR…LISS) and 226–252 (LANK…SRTK).

The protein is F-box protein At3g12350 of Arabidopsis thaliana (Mouse-ear cress).